A 409-amino-acid chain; its full sequence is uncharacterized protein (409 aa).

Basic and acidic residues predominate over residues 36–50 (HLKAKARAQESDSDR). Disordered regions lie at residues 36-67 (HLKA…TFSS), 239-298 (IENT…SSTI), and 338-373 (RSQI…TGPR). Positions 51-67 (PCSSIESSSEPASTFSS) are enriched in low complexity. Residues 245-265 (VREESNQEHPPGKQEKTEKHP) show a composition bias toward basic and acidic residues. A compositionally biased stretch (polar residues) spans 268 to 281 (LQGSHQAEPETSSK). Composition is skewed to basic and acidic residues over residues 282–294 (NSEE…KMDD) and 338–350 (RSQI…EGRR).

This is an uncharacterized protein from Homo sapiens (Human).